We begin with the raw amino-acid sequence, 115 residues long: Putative membrane protein insertion efficiency factor (115 aa).

It belongs to the UPF0161 family.

The protein resides in the cell membrane. Could be involved in insertion of integral membrane proteins into the membrane. This Mycolicibacterium paratuberculosis (strain ATCC BAA-968 / K-10) (Mycobacterium paratuberculosis) protein is Putative membrane protein insertion efficiency factor.